The primary structure comprises 632 residues: MHGLLLAGLAAALPLGVAGLPARQQSGLSPRGIDINAYRFASMAKYSEHKTTSQMVHSFSYSKDDDYVATATKLVKSTFPNMTFRTVKDHYIGTNGIGHVHFKQTAHGIDIDNADFNVNIGRDGKVFTFGNSFFEGEMPKTNPLTKRDFSDPVKALHGAVKTLKIPVKPESAKAMPMKEVETFKFEGTSGALSEPKAKLVYLQKDGNLHLTWRVETDVGDNWLLSYVDAKESETVHNVVDYVASADYKVFAWGLNDPTEGQPTMIKDPWNTTGSGSPFTWHGDGQMDYTVTRGNNVPAQDNPSGGSQWENNYRPESAELSFVYEYSEQMEPEQYKDFAITQLFYTVNTFHDVLYTLGFTEEAGNFQMNNNGKGGQGNDFAICNAQDGSGTNNANFATPPDGQPGRMRMYTWTTAQPSRDGDLEAGIVIHEYTHGLSNRLCGGPANSNCLNELEAGGMGEGWGDFYATAIRLKQGDTHDTDYTMGEWAANQKGGIREYPYSTNMQTNPYTYADVQGMSEVHGIGTVWATILYDVLWNLIDEHGMGKNIMPKFVNGAPTDGRNLAMKLVLDGMTLMPCNPNFMQARDAIIDADQALTNGQNKCALMKAFAKRGLGSNYKHGKNRVNNFDMPAGC.

The N-terminal stretch at 1-19 (MHGLLLAGLAAALPLGVAG) is a signal peptide. A propeptide spanning residues 20-244 (LPARQQSGLS…VHNVVDYVAS (225 aa)) is cleaved from the precursor. Residue Asn-270 is glycosylated (N-linked (GlcNAc...) asparagine). Zn(2+) is bound at residue His-429. Glu-430 is a catalytic residue. His-433 is a binding site for Zn(2+).

The protein belongs to the peptidase M36 family. The cofactor is Zn(2+).

Its subcellular location is the secreted. Its function is as follows. Secreted metalloproteinase that allows assimilation of proteinaceous substrates and probably acts as a virulence factor. This is Extracellular metalloproteinase 2 (MEP2) from Arthroderma gypseum (strain ATCC MYA-4604 / CBS 118893) (Microsporum gypseum).